We begin with the raw amino-acid sequence, 79 residues long: uncharacterized protein (79 aa).

Residues 1 to 24 (MNKFLNLIGLAFVLVLCAFSCSNA) form the signal peptide. A LysM domain is found at 32–78 (SWHVAQKGYTCYDMATSCKVTLDQFMRTNKLDNNACKLVQIGRKYCC).

The protein localises to the secreted. This is an uncharacterized protein from Dictyostelium discoideum (Social amoeba).